Consider the following 139-residue polypeptide: uncharacterized protein (139 aa).

The protein to E.coli YecT.

This is an uncharacterized protein from Rhizobium meliloti (strain 1021) (Ensifer meliloti).